A 503-amino-acid polypeptide reads, in one-letter code: Arabinose import ATP-binding protein AraG 1 (503 aa).

2 ABC transporter domains span residues 5 to 240 (LRFD…MVGR) and 253 to 497 (LGDV…LPQG). Position 37–44 (37–44 (GENGAGKS)) interacts with ATP.

It belongs to the ABC transporter superfamily. Arabinose importer (TC 3.A.1.2.2) family. In terms of assembly, the complex is composed of two ATP-binding proteins (AraG), two transmembrane proteins (AraH) and a solute-binding protein (AraF).

Its subcellular location is the cell inner membrane. It carries out the reaction L-arabinose(out) + ATP + H2O = L-arabinose(in) + ADP + phosphate + H(+). In terms of biological role, part of the ABC transporter complex AraFGH involved in arabinose import. Responsible for energy coupling to the transport system. The sequence is that of Arabinose import ATP-binding protein AraG 1 from Burkholderia thailandensis (strain ATCC 700388 / DSM 13276 / CCUG 48851 / CIP 106301 / E264).